The sequence spans 546 residues: Metal transporter Nramp6.2 (546 aa).

8 helical membrane passes run 50 to 70 (FLPYVGPGFLVSLAYLDPGNL), 83 to 103 (ELLWVILIGLIFALIIQSLAA), 128 to 150 (SLWLLAEVAVIAADIPEVIGTAF), 154 to 176 (ILFHIPVWAGVLMTGLSTLLLLG), 187 to 207 (LLISALVFTMAACFFGELSYV), 233 to 253 (IALLGALVMPHNLFLHSALVL), 270 to 290 (YFLIESGFALFVAFLINVSII), and 333 to 353 (IYAIALLASGQSSTITGTYAG). Asn-371 is a glycosylation site (N-linked (GlcNAc...) asparagine). A run of 4 helical transmembrane segments spans residues 374 to 394 (TRCIAILPSLFVSIIGGSSGA), 397 to 417 (LIIIASMILSFELPFALIPLL), 433 to 453 (IYIIVISWTLGFMIIGINVYY), and 473 to 493 (VIIGIIVFPLMAIYILAIIYL).

The protein belongs to the NRAMP (TC 2.A.55) family.

Its subcellular location is the membrane. Functionally, probable divalent metal transporter. This Populus trichocarpa (Western balsam poplar) protein is Metal transporter Nramp6.2.